Here is a 500-residue protein sequence, read N- to C-terminus: Cholesterol 24-hydroxylase (500 aa).

A helical membrane pass occupies residues 3 to 23; that stretch reads PGLLLLGSAVLLAFGLCCTFV. A heme-binding site is contributed by cysteine 437.

This sequence belongs to the cytochrome P450 family. Requires heme as cofactor. Expressed in high level in the pyramidal cells of the hippocampus, Purkinje cells of the cerebellum, and neuronal cell bodies in layers II/III, V, and VI of the cortex. Expressed in hippocampal and cerebellar interneurons, in retinal ganglion cells, and in a subset of retinal cells localized to the inner nuclear layer (at protein level).

Its subcellular location is the endoplasmic reticulum membrane. The protein resides in the microsome membrane. It localises to the postsynapse. It is found in the presynapse. The protein localises to the cell projection. Its subcellular location is the dendrite. It carries out the reaction cholesterol + reduced [NADPH--hemoprotein reductase] + O2 = (24S)-hydroxycholesterol + oxidized [NADPH--hemoprotein reductase] + H2O + H(+). The enzyme catalyses cholestanol + reduced [NADPH--hemoprotein reductase] + O2 = (24S)-hydroxycholestanol + oxidized [NADPH--hemoprotein reductase] + H2O + H(+). The catalysed reaction is 7-dehydrocholesterol + reduced [NADPH--hemoprotein reductase] + O2 = cholesta-5,7-dien-3beta,24S-diol + oxidized [NADPH--hemoprotein reductase] + H2O + H(+). It catalyses the reaction 7-dehydrocholesterol + reduced [NADPH--hemoprotein reductase] + O2 = cholesta-5,7-dien-3beta,25-diol + oxidized [NADPH--hemoprotein reductase] + H2O + H(+). It carries out the reaction desmosterol + reduced [NADPH--hemoprotein reductase] + O2 = (24Z),26-hydroxydesmosterol + oxidized [NADPH--hemoprotein reductase] + H2O + H(+). The enzyme catalyses desmosterol + reduced [NADPH--hemoprotein reductase] + O2 = (24S)-25-epoxycholesterol + oxidized [NADPH--hemoprotein reductase] + H2O + H(+). The catalysed reaction is 4beta-hydroxycholesterol + reduced [NADPH--hemoprotein reductase] + O2 = 4beta,24S-dihydroxycholesterol + oxidized [NADPH--hemoprotein reductase] + H2O + H(+). It catalyses the reaction (24S)-hydroxycholesterol + reduced [NADPH--hemoprotein reductase] + O2 = (24S,25R)-24,26-dihydroxycholesterol + oxidized [NADPH--hemoprotein reductase] + H2O + H(+). It carries out the reaction (24S)-hydroxycholesterol + reduced [NADPH--hemoprotein reductase] + O2 = 24S,25-dihydroxycholesterol + oxidized [NADPH--hemoprotein reductase] + H2O + H(+). The enzyme catalyses 7alpha-hydroxycholesterol + reduced [NADPH--hemoprotein reductase] + O2 = (24S)-7alpha-dihydroxycholesterol + oxidized [NADPH--hemoprotein reductase] + H2O + H(+). The catalysed reaction is progesterone + reduced [NADPH--hemoprotein reductase] + O2 = 17alpha-hydroxyprogesterone + oxidized [NADPH--hemoprotein reductase] + H2O + H(+). It catalyses the reaction testosterone + reduced [NADPH--hemoprotein reductase] + O2 = 16beta,17beta-dihydroxyandrost-4-en-3-one + oxidized [NADPH--hemoprotein reductase] + H2O + H(+). It carries out the reaction testosterone + reduced [NADPH--hemoprotein reductase] + O2 = 2-hydroxytestosterone + oxidized [NADPH--hemoprotein reductase] + H2O + H(+). The enzyme catalyses testosterone + reduced [NADPH--hemoprotein reductase] + O2 = 6beta,17beta-dihydroxyandrost-4-en-3-one + oxidized [NADPH--hemoprotein reductase] + H2O + H(+). The protein operates within steroid metabolism; cholesterol degradation. It participates in lipid metabolism; C21-steroid hormone metabolism. In terms of biological role, P450 monooxygenase that plays a major role in cholesterol homeostasis in the brain. Primarily catalyzes the hydroxylation (with S stereochemistry) at C-24 of cholesterol side chain, triggering cholesterol diffusion out of neurons and its further degradation. By promoting constant cholesterol elimination in neurons, may activate the mevalonate pathway and coordinate the synthesis of new cholesterol and nonsterol isoprenoids involved in synaptic activity and learning. Further hydroxylates cholesterol derivatives and hormone steroids on both the ring and side chain of these molecules, converting them into active oxysterols involved in lipid signaling and biosynthesis. Acts as an epoxidase converting cholesta-5,24-dien-3beta-ol/desmosterol into (24S),25-epoxycholesterol, an abundant lipid ligand of nuclear NR1H2 and NR1H3 receptors shown to promote neurogenesis in developing brain. May also catalyze the oxidative metabolism of xenobiotics, such as clotrimazole. This chain is Cholesterol 24-hydroxylase, found in Mus musculus (Mouse).